An 85-amino-acid chain; its full sequence is Toxin BmKa1 (85 aa).

Residues 1–19 (MNYLVFFSLALLLMTGVGS) form the signal peptide. In terms of domain architecture, LCN-type CS-alpha/beta spans 21-83 (RDGYIADDKN…VPIRVPGKCN (63 aa)). Disulfide bonds link Cys-31/Cys-82, Cys-35/Cys-55, Cys-41/Cys-65, and Cys-45/Cys-67.

This sequence belongs to the long (4 C-C) scorpion toxin superfamily. Sodium channel inhibitor family. Alpha subfamily. In terms of tissue distribution, expressed by the venom gland.

The protein resides in the secreted. Alpha toxins bind voltage-independently at site-3 of sodium channels (Nav) and inhibit the inactivation of the activated channels, thereby blocking neuronal transmission. In Olivierus martensii (Manchurian scorpion), this protein is Toxin BmKa1.